A 477-amino-acid chain; its full sequence is Probable cytosolic Fe-S cluster assembly factor GG21400 (477 aa).

Residues Cys-23, Cys-68, Cys-71, Cys-74, Cys-187, Cys-243, Cys-395, and Cys-399 each contribute to the [4Fe-4S] cluster site.

The protein belongs to the NARF family.

In terms of biological role, component of the cytosolic iron-sulfur (Fe/S) protein assembly machinery. Required for maturation of extramitochondrial Fe/S proteins. The protein is Probable cytosolic Fe-S cluster assembly factor GG21400 of Drosophila erecta (Fruit fly).